Here is a 160-residue protein sequence, read N- to C-terminus: S-adenosylmethionine decarboxylase proenzyme (160 aa).

S73 serves as the catalytic Schiff-base intermediate with substrate; via pyruvic acid. S73 is subject to Pyruvic acid (Ser); by autocatalysis. H78 (proton acceptor; for processing activity) is an active-site residue. The active-site Proton donor; for catalytic activity is C93.

Belongs to the prokaryotic AdoMetDC family. Type 1 subfamily. Heterotetramer of two alpha and two beta chains arranged as a dimer of alpha/beta heterodimers. Requires pyruvate as cofactor. Post-translationally, is synthesized initially as an inactive proenzyme. Formation of the active enzyme involves a self-maturation process in which the active site pyruvoyl group is generated from an internal serine residue via an autocatalytic post-translational modification. Two non-identical subunits are generated from the proenzyme in this reaction, and the pyruvate is formed at the N-terminus of the alpha chain, which is derived from the carboxyl end of the proenzyme. The post-translation cleavage follows an unusual pathway, termed non-hydrolytic serinolysis, in which the side chain hydroxyl group of the serine supplies its oxygen atom to form the C-terminus of the beta chain, while the remainder of the serine residue undergoes an oxidative deamination to produce ammonia and the pyruvoyl group blocking the N-terminus of the alpha chain.

The enzyme catalyses S-adenosyl-L-methionine + H(+) = S-adenosyl 3-(methylsulfanyl)propylamine + CO2. The protein operates within amine and polyamine biosynthesis; S-adenosylmethioninamine biosynthesis; S-adenosylmethioninamine from S-adenosyl-L-methionine: step 1/1. In terms of biological role, catalyzes the decarboxylation of S-adenosylmethionine to S-adenosylmethioninamine (dcAdoMet), the propylamine donor required for the synthesis of the polyamines spermine and spermidine from the diamine putrescine. This chain is S-adenosylmethionine decarboxylase proenzyme, found in Pseudomonas paraeruginosa (strain DSM 24068 / PA7) (Pseudomonas aeruginosa (strain PA7)).